Here is a 367-residue protein sequence, read N- to C-terminus: Choline-phosphate cytidylyltransferase A (367 aa).

The residue at position 1 (Met1) is an N-acetylmethionine. Positions 1-33 (MDAQCSAKVNARKRRKEAPGPNGATEEDGVPSK) are disordered. At Lys8 the chain carries N6-acetyllysine. 4 residues coordinate CTP: Ile84, Phe85, His92, and Lys122. Phosphocholine-binding residues include Lys122 and Trp151. CTP-binding residues include His168, Asp169, Tyr173, Gln195, Arg196, Thr197, and Ile200. Amphipathic stretches follow at residues 228–287 (KELN…EFIG) and 298–315 (ALKH…QAIS). Ser233 carries the phosphoserine modification. Residues 272–293 (IDLIQKWEEKSREFIGSFLEMF) form an autoinhibitory (AI) region. The interval 313 to 367 (AISPKQSPSSSPTRERSPSPSFRWPFSGKTSPPCSPANLSRHKAAAYDISEDEED) is disordered. 5 positions are modified to phosphoserine: Ser315, Ser319, Ser321, Ser322, and Ser323. Repeat unit 1 spans residues 319–324 (SPSSSP). Residues 319–339 (SPSSSPTRERSPSPSFRWPFS) show a composition bias toward low complexity. The residue at position 325 (Thr325) is a Phosphothreonine. 3 positions are modified to phosphoserine: Ser329, Ser331, and Ser333. One copy of the 2; approximate repeat lies at 329–333 (SPSPS). Thr342 bears the Phosphothreonine mark. Residues Ser343, Ser347, Ser352, and Ser362 each carry the phosphoserine modification. Repeat 3 spans residues 343-348 (SPPCSP).

Belongs to the cytidylyltransferase family. Homodimer. The serine residues of the C-terminus are phosphorylated. The inactive soluble form is stabilized by phosphorylation, the active membrane bound form is promoted by anionic lipids or diacylglycerol, and is stabilized by dephosphorylation. In terms of processing, monoubiquitinated by the SCF(FBXL2) complex, leading to proteasomal degradation. As to expression, brain, placenta, liver, fetal and adult lung.

The protein localises to the cytoplasm. Its subcellular location is the cytosol. It is found in the membrane. The protein resides in the endoplasmic reticulum membrane. It localises to the nucleus. It catalyses the reaction phosphocholine + CTP + H(+) = CDP-choline + diphosphate. It functions in the pathway phospholipid metabolism; phosphatidylcholine biosynthesis; phosphatidylcholine from phosphocholine: step 1/2. With respect to regulation, interconverts between an inactive cytosolic form and an active membrane-bound form. Activation involves disruption of an inhibitory interaction between helices at the base of the active site and the autoinhibitory (AI) region. Activated by anionic lipid vesicles and by oleic acid or diacylglycerol-containing phosphatidylcholine vesicles. Functionally, catalyzes the key rate-limiting step in the CDP-choline pathway for phosphatidylcholine biosynthesis. The polypeptide is Choline-phosphate cytidylyltransferase A (PCYT1A) (Homo sapiens (Human)).